Here is a 551-residue protein sequence, read N- to C-terminus: Adenine deaminase (551 aa).

This sequence belongs to the metallo-dependent hydrolases superfamily. Adenine deaminase family. Requires Mn(2+) as cofactor.

The enzyme catalyses adenine + H2O + H(+) = hypoxanthine + NH4(+). This is Adenine deaminase from Methanosarcina barkeri (strain Fusaro / DSM 804).